The following is a 490-amino-acid chain: Glutamyl-tRNA(Gln) amidotransferase subunit A (490 aa).

Active-site charge relay system residues include K76 and S151. S175 functions as the Acyl-ester intermediate in the catalytic mechanism.

Belongs to the amidase family. GatA subfamily. In terms of assembly, heterotrimer of A, B and C subunits.

It carries out the reaction L-glutamyl-tRNA(Gln) + L-glutamine + ATP + H2O = L-glutaminyl-tRNA(Gln) + L-glutamate + ADP + phosphate + H(+). Allows the formation of correctly charged Gln-tRNA(Gln) through the transamidation of misacylated Glu-tRNA(Gln) in organisms which lack glutaminyl-tRNA synthetase. The reaction takes place in the presence of glutamine and ATP through an activated gamma-phospho-Glu-tRNA(Gln). In Aromatoleum aromaticum (strain DSM 19018 / LMG 30748 / EbN1) (Azoarcus sp. (strain EbN1)), this protein is Glutamyl-tRNA(Gln) amidotransferase subunit A.